A 477-amino-acid polypeptide reads, in one-letter code: Mitochondrial adenyl nucleotide antiporter SLC25A24 (477 aa).

Residues 1–173 (MLRWLRDFVL…RFWKHSTGID (173 aa)) are regulatory N-terminal domain. The Mitochondrial intermembrane segment spans residues 1 to 197 (MLRWLRDFVL…EKKSGQWWRQ (197 aa)). EF-hand domains lie at 19–54 (EQPT…LGIP), 55–88 (LGQD…KDHE), 86–121 (DHEK…LGLT), and 122–157 (ISEQ…NPVT). Asp-32, Asn-34, Asp-36, Val-38, Glu-43, Asp-68, Asn-70, Asp-72, Lys-74, Glu-79, Asp-99, Asn-101, Asp-103, Lys-105, Glu-110, Asp-135, Asp-137, Thr-139, Thr-141, and Glu-146 together coordinate Ca(2+). A linker region region spans residues 159-168 (IEEIIRFWKH). The tract at residues 174-477 (IGDSLTIPDE…MKQTLGVTQK (304 aa)) is C-terminal transmembrane transporter domain. Solcar repeat units follow at residues 192–278 (GQWW…YKKL), 286–371 (IGTF…LKSY), and 383–471 (PGVM…MKQT). A helical membrane pass occupies residues 198–215 (LLAGGIAGAVSRTSTAPL). Over 216 to 252 (DRLKIMMQVHGSKSDKMNIFGGFRQMVKEGGIRSLWR) the chain is Mitochondrial matrix. A helical membrane pass occupies residues 253 to 272 (GNGTNVIKIAPETAVKFWAY). At 273–295 (EQYKKLLTEEGQKIGTFERFISG) the chain is on the mitochondrial intermembrane side. Residues 296–309 (SMAGATAQTFIYPM) traverse the membrane as a helical segment. Residues 310 to 345 (EVMKTRLAVGKTGQYSGIYDCAKKILKHEGLGAFYK) are Mitochondrial matrix-facing. N6-acetyllysine; alternate is present on Lys-320. Lys-320 bears the N6-succinyllysine; alternate mark. Lys-336 is modified (N6-acetyllysine). Residues 346–365 (GYVPNLLGIIPYAGIDLAVY) traverse the membrane as a helical segment. Residues 366–388 (ELLKSYWLDNFAKDSVNPGVMVL) are Mitochondrial intermembrane-facing. The helical transmembrane segment at 389–406 (LGCGALSSTCGQLASYPL) threads the bilayer. The Mitochondrial matrix portion of the chain corresponds to 407–445 (ALVRTRMQAQAMLEGSPQLNMVGLFRRIISKEGIPGLYR). Lys-437 bears the N6-acetyllysine; alternate mark. Position 437 is an N6-succinyllysine; alternate (Lys-437). Residues 446-465 (GITPNFMKVLPAVGISYVVY) form a helical membrane-spanning segment. Residues 466-477 (ENMKQTLGVTQK) are Mitochondrial intermembrane-facing.

Belongs to the mitochondrial carrier (TC 2.A.29) family. As to quaternary structure, monomer. Expressed in all tissues tested. Highly expressed in testis, expressed at intermediate level in small intestine and pancreas, and weakly expressed in kidney, spleen, liver, skeletal muscle and heart.

It is found in the mitochondrion inner membrane. The enzyme catalyses Mg(2+)(out) + phosphate(in) + ATP(out) = Mg(2+)(in) + phosphate(out) + ATP(in). It catalyses the reaction ADP(out) + phosphate(in) + H(+)(out) = ADP(in) + phosphate(out) + H(+)(in). It carries out the reaction AMP(out) + phosphate(in) = AMP(in) + phosphate(out). The catalysed reaction is phosphate(in) + ATP(out) + 2 H(+)(out) = phosphate(out) + ATP(in) + 2 H(+)(in). The enzyme catalyses dADP(in) + ADP(out) = dADP(out) + ADP(in). It catalyses the reaction Mg(2+)(in) + ADP(out) + ATP(in) + H(+)(out) = Mg(2+)(out) + ADP(in) + ATP(out) + H(+)(in). It carries out the reaction ADP(out) + diphosphate(in) = ADP(in) + diphosphate(out). The catalysed reaction is dAMP(in) + ADP(out) + H(+)(out) = dAMP(out) + ADP(in) + H(+)(in). The enzyme catalyses 3'-AMP(in) + ADP(out) + H(+)(out) = 3'-AMP(out) + ADP(in) + H(+)(in). It catalyses the reaction dAMP(out) + phosphate(in) = dAMP(in) + phosphate(out). It carries out the reaction 3'-AMP(out) + phosphate(in) = 3'-AMP(in) + phosphate(out). The catalysed reaction is dADP(out) + phosphate(in) + H(+)(out) = dADP(in) + phosphate(out) + H(+)(in). Its activity is regulated as follows. Activated by an increase in cytosolic calcium levels that induce a conformational change of the N-terminal regulatory domain, uncapping the channel and allowing transport. Inhibited by bathophenanthroline, mersalyl, p-hydroxymercuribenzoate, bromcresol purple and tannic acid. Electroneutral antiporter that mediates the transport of adenyl nucleotides through the inner mitochondrial membrane. Originally identified as an ATP-magnesium/inorganic phosphate antiporter, it also acts as a broad specificity adenyl nucleotide antiporter. By regulating the mitochondrial matrix adenyl nucleotide pool could adapt to changing cellular energetic demands and indirectly regulate adenyl nucleotide-dependent metabolic pathways. In vitro, a low activity is also observed with guanyl and pyrimidine nucleotides. May play a role in protecting cells against oxidative stress-induced cell death, by buffering calcium levels in the mitochondrial matrix through the formation of calcium-phosphate precipitates. The protein is Mitochondrial adenyl nucleotide antiporter SLC25A24 of Homo sapiens (Human).